Reading from the N-terminus, the 469-residue chain is Cysteine--tRNA ligase (469 aa).

Cys-29 lines the Zn(2+) pocket. Residues Pro-31–Asn-41 carry the 'HIGH' region motif. Zn(2+)-binding residues include Cys-210, His-235, and Glu-239. Residues Lys-267–Ser-271 carry the 'KMSKS' region motif. Lys-270 provides a ligand contact to ATP.

It belongs to the class-I aminoacyl-tRNA synthetase family. In terms of assembly, monomer. Requires Zn(2+) as cofactor.

The protein localises to the cytoplasm. It catalyses the reaction tRNA(Cys) + L-cysteine + ATP = L-cysteinyl-tRNA(Cys) + AMP + diphosphate. In Thermosipho africanus (strain TCF52B), this protein is Cysteine--tRNA ligase.